A 256-amino-acid polypeptide reads, in one-letter code: N-acetylglucosaminyldiphosphoundecaprenol N-acetyl-beta-D-mannosaminyltransferase (256 aa).

Belongs to the glycosyltransferase 26 family. TagA/TarA subfamily.

It catalyses the reaction UDP-N-acetyl-alpha-D-mannosamine + N-acetyl-alpha-D-glucosaminyl-di-trans,octa-cis-undecaprenyl diphosphate = N-acetyl-beta-D-mannosaminyl-(1-&gt;4)-N-acetyl-alpha-D-glucosaminyl di-trans,octa-cis-undecaprenyl diphosphate + UDP + H(+). It participates in cell wall biogenesis; poly(glycerol phosphate) teichoic acid biosynthesis. In terms of biological role, catalyzes the conversion of GlcNAc-PP-undecaprenol into ManNAc-GlcNAc-PP-undecaprenol, the first committed lipid intermediate in the de novo synthesis of teichoic acid. The polypeptide is N-acetylglucosaminyldiphosphoundecaprenol N-acetyl-beta-D-mannosaminyltransferase (Bacillus subtilis (strain 168)).